The primary structure comprises 221 residues: Ras-related protein Rab-27A (221 aa).

Ser-2 carries the post-translational modification N-acetylserine. Ser-2 is modified (phosphoserine). 16–24 lines the GTP pocket; sequence GDSGVGKTS. Residues 38 to 46 carry the Effector region motif; sequence FITTVGIDF. GTP-binding positions include 74–78, 133–136, and 163–165; these read DTAGQ, NKSD, and SAA. The cysteines at positions 123 and 188 are disulfide-linked. The interval 202-221 is disordered; the sequence is NGHTSADPLNEEKEKGSCGC. Positions 211 to 221 are enriched in basic and acidic residues; the sequence is NEEKEKGSCGC. Residues Cys-219 and Cys-221 are each lipidated (S-geranylgeranyl cysteine). At Cys-221 the chain carries Cysteine methyl ester.

Belongs to the small GTPase superfamily. Rab family. In terms of assembly, binds SYTL1, SLAC2B, MYRIP, SYTL3, SYTL4 and SYTL5. Interacts with RPH3A and RPH3A. Binds MLPH and SYTL2. Interacts with UNC13D. Does not interact with the BLOC-3 complex (heterodimer of HPS1 and HPS4). Interacts (GDP-bound form preferentially) with DENND10.

It localises to the membrane. The protein resides in the melanosome. The protein localises to the late endosome. It is found in the lysosome. It catalyses the reaction GTP + H2O = GDP + phosphate + H(+). Regulated by guanine nucleotide exchange factors (GEFs) which promote the exchange of bound GDP for free GTP, GTPase activating proteins (GAPs) which increase the GTP hydrolysis activity, and GDP dissociation inhibitors which inhibit the dissociation of the nucleotide from the GTPase. Activated by GEFs such as DENND10. Functionally, small GTPase which cycles between active GTP-bound and inactive GDP-bound states. In its active state, binds to a variety of effector proteins to regulate homeostasis of late endocytic pathway, including endosomal positioning, maturation and secretion. Plays a role in cytotoxic granule exocytosis in lymphocytes. Required for both granule maturation and granule docking and priming at the immunologic synapse. The chain is Ras-related protein Rab-27A (RAB27A) from Sus scrofa (Pig).